Here is an 85-residue protein sequence, read N- to C-terminus: Large ribosomal subunit protein bL27 (85 aa).

The tract at residues 1 to 21 is disordered; sequence MAHKKAGGSTRNGRDSESKRL.

Belongs to the bacterial ribosomal protein bL27 family.

This chain is Large ribosomal subunit protein bL27, found in Photorhabdus laumondii subsp. laumondii (strain DSM 15139 / CIP 105565 / TT01) (Photorhabdus luminescens subsp. laumondii).